Consider the following 406-residue polypeptide: Tyrosine--tRNA ligase (406 aa).

Tyr35 serves as a coordination point for L-tyrosine. The 'HIGH' region motif lies at 40–49 (PTADSLHVGH). Residues Tyr168 and Gln172 each contribute to the L-tyrosine site. The short motif at 228-232 (KMGKT) is the 'KMSKS' region element. Lys231 is an ATP binding site. The 66-residue stretch at 340–405 (STVLDVIAKV…GKKNYNKIEI (66 aa)) folds into the S4 RNA-binding domain.

Belongs to the class-I aminoacyl-tRNA synthetase family. TyrS type 1 subfamily. As to quaternary structure, homodimer.

Its subcellular location is the cytoplasm. The catalysed reaction is tRNA(Tyr) + L-tyrosine + ATP = L-tyrosyl-tRNA(Tyr) + AMP + diphosphate + H(+). Catalyzes the attachment of tyrosine to tRNA(Tyr) in a two-step reaction: tyrosine is first activated by ATP to form Tyr-AMP and then transferred to the acceptor end of tRNA(Tyr). This is Tyrosine--tRNA ligase from Clostridium botulinum (strain Eklund 17B / Type B).